A 999-amino-acid polypeptide reads, in one-letter code: MFPNQNNGAAPGQGPAVDGQQSLNYNGLPAQQQQQLAQSTKNVRKKPYVKITEQPAGKALRFRYECEGRSAGSIPGVNSTPENKTYPTIEIVGYKGRAVVVVSCVTKDTPYRPHPHNLVGKEGCKKGVCTLEINSETMRAVFSNLGIQCVKKKDIEAALKAREEIRVDPFKTGFSHRFQPSSIDLNSVRLCFQVFMESEQKGRFTSPLPPVVSEPIFDKKAMSDLVICRLCSCSATVFGNTQIILLCEKVAKEDISVRFFEEKNGQSVWEAFGDFQHTDVHKQTAITFKTPRYHTLDITEPAKVFIQLRRPSDGVTSEALPFEYVPMDSGKHTFWNLHRHLKRKPDEDLFQQILRLDAKREVQPPTIEVIDLDTPKIDVQREIPSEMEFNHEESQQSEPALEQEQSVQQEQYTQEQSLQQEQYTQEQSLQQEQYLQQLEQQQSFQLEEPMQQDQELPAQQSFDQAIDHLPDHTSDHIPEDMEAADAHAEAEAHRLRSEQEKEIDTIIDEKVRELEQLDLGQQLEPRPLTANDKITEWMKSSEIEQQVHEPSPTAEADVLDSALEISKADKTLDELLETVAELDEIYTDFKVQRDTYKNTIQNELAGLQGRAPLQVEDSFDDAATYTSLQIAFKNPVLIPMDDIMPPTPPMSQCAPEDAHQHYDPVEVNSQARKPETPMRPVPPVPPAILTIQYPPEEDKLPPLPPKRIRKQDSNAENRSIEANTVQTKPSTGESPLNKRLPPAPKNPNFNTLPRQKKPGFFSKLFSRRKSKPDLAQGQENSSILDSKANSREPSIGHFNMQDPMRASLRSSKSAAPFISNPAPAKSSPVKAKKPGSKLTKPVGRSVSSVSGKRPAYLNADVVHIPLKGDSVNSLPQQQRTEGYSQSSTISVGAGLDRRTASALQLADIPISEGGMELVAIADRQSLHNLVSSIEGHFNVQLDPNLDLTEAEHFALYTSIPPLAAASEFDETSAYYAPVDAGEILTPDEVAKRLAAANGI.

A disordered region spans residues Met-1–Arg-44. The RHD domain maps to Pro-47 to Lys-342. Ser-312 carries the phosphoserine; by PKA modification. Disordered stretches follow at residues Phe-389–Thr-424 and Gln-670–Gly-851. Positions Glu-402 to Thr-424 are enriched in low complexity. The Nuclear export signal motif lies at Asn-668–Pro-677. Pro residues predominate over residues Pro-677–Pro-686. Residues Lys-710 to Ser-719 show a composition bias toward basic and acidic residues. A compositionally biased stretch (polar residues) spans Ile-720 to Ser-734. The Nuclear localization signal motif lies at Lys-756–Asp-773. Composition is skewed to low complexity over residues Ser-819–Val-829 and Ser-836–Gly-851.

As to quaternary structure, interacts with tamo via the nuclear localization signal. Interacts with emb, a component of the nuclear export complex. As to expression, in unchallenged larvae, expression of both isoforms is seen in fat body and gut (isoform A is more abundant). After immune challenge levels of both isoforms are enhanced.

The protein resides in the cytoplasm. It is found in the nucleus. Its function is as follows. Embryonic developmental transcription factor. The lateral or ventral identity of a cell depends upon the concentration of this protein in its nucleus during the blastoderm stage. Acts as a morphogenetic transcription factor that specifically binds to the kappa-B-related consensus sequence 5'-GRGAAAANCC-3', located in the enhancer region of zygotic genes such as Zen, Twist, Snail and Decapentaplegic, promoting their expression. Part of a signaling pathway involving NF-kappa-B and Toll-related receptors, that functions in the apoptosis of unfit cells during cell competition. Mediates an immune response in larvae. May be part of a NF-kappa-B and Tollo signaling cascade that regulates development of the peripheral nervous system. This is Embryonic polarity protein dorsal (dl) from Drosophila melanogaster (Fruit fly).